Reading from the N-terminus, the 98-residue chain is NADH-ubiquinone oxidoreductase chain 4L (98 aa).

A run of 3 helical transmembrane segments spans residues Met-1–Val-21, Ser-29–Leu-49, and Ile-61–Val-81.

It belongs to the complex I subunit 4L family. As to quaternary structure, core subunit of respiratory chain NADH dehydrogenase (Complex I) which is composed of 45 different subunits.

Its subcellular location is the mitochondrion inner membrane. It carries out the reaction a ubiquinone + NADH + 5 H(+)(in) = a ubiquinol + NAD(+) + 4 H(+)(out). Core subunit of the mitochondrial membrane respiratory chain NADH dehydrogenase (Complex I) which catalyzes electron transfer from NADH through the respiratory chain, using ubiquinone as an electron acceptor. Part of the enzyme membrane arm which is embedded in the lipid bilayer and involved in proton translocation. This Lynx canadensis (Canada lynx) protein is NADH-ubiquinone oxidoreductase chain 4L (MT-ND4L).